Consider the following 1486-residue polypeptide: Chromosome partition protein MukB (1486 aa).

ATP is bound at residue 34–41 (GGNGAGKS). 3 coiled-coil regions span residues 334–418 (SDHL…QYNQ), 444–480 (LETF…QAYQ), and 509–603 (RHLA…RAPV). Positions 666-783 (PGGSEDQRLN…EVPLFGRAAR (118 aa)) are flexible hinge. Coiled coils occupy residues 835–923 (EAEI…AKLE), 977–1115 (EMLS…TAKA), and 1209–1266 (VEAI…QNVS).

Belongs to the SMC family. MukB subfamily. As to quaternary structure, homodimerization via its hinge domain. Binds to DNA via its C-terminal region. Interacts, and probably forms a ternary complex, with MukE and MukF via its C-terminal region. The complex formation is stimulated by calcium or magnesium. Interacts with tubulin-related protein FtsZ.

The protein localises to the cytoplasm. It is found in the nucleoid. In terms of biological role, plays a central role in chromosome condensation, segregation and cell cycle progression. Functions as a homodimer, which is essential for chromosome partition. Involved in negative DNA supercoiling in vivo, and by this means organize and compact chromosomes. May achieve or facilitate chromosome segregation by condensation DNA from both sides of a centrally located replisome during cell division. In Shigella sonnei (strain Ss046), this protein is Chromosome partition protein MukB.